Here is a 336-residue protein sequence, read N- to C-terminus: Holliday junction branch migration complex subunit RuvB (336 aa).

The large ATPase domain (RuvB-L) stretch occupies residues S4–Y184. Residues I23, R24, G65, K68, T69, T70, E131 to Y133, R174, Y184, and R221 contribute to the ATP site. T69 is a binding site for Mg(2+). The tract at residues S185–E255 is small ATPAse domain (RuvB-S). The head domain (RuvB-H) stretch occupies residues Q258 to E336. Positions 313 and 318 each coordinate DNA.

This sequence belongs to the RuvB family. In terms of assembly, homohexamer. Forms an RuvA(8)-RuvB(12)-Holliday junction (HJ) complex. HJ DNA is sandwiched between 2 RuvA tetramers; dsDNA enters through RuvA and exits via RuvB. An RuvB hexamer assembles on each DNA strand where it exits the tetramer. Each RuvB hexamer is contacted by two RuvA subunits (via domain III) on 2 adjacent RuvB subunits; this complex drives branch migration. In the full resolvosome a probable DNA-RuvA(4)-RuvB(12)-RuvC(2) complex forms which resolves the HJ.

The protein localises to the cytoplasm. The enzyme catalyses ATP + H2O = ADP + phosphate + H(+). Functionally, the RuvA-RuvB-RuvC complex processes Holliday junction (HJ) DNA during genetic recombination and DNA repair, while the RuvA-RuvB complex plays an important role in the rescue of blocked DNA replication forks via replication fork reversal (RFR). RuvA specifically binds to HJ cruciform DNA, conferring on it an open structure. The RuvB hexamer acts as an ATP-dependent pump, pulling dsDNA into and through the RuvAB complex. RuvB forms 2 homohexamers on either side of HJ DNA bound by 1 or 2 RuvA tetramers; 4 subunits per hexamer contact DNA at a time. Coordinated motions by a converter formed by DNA-disengaged RuvB subunits stimulates ATP hydrolysis and nucleotide exchange. Immobilization of the converter enables RuvB to convert the ATP-contained energy into a lever motion, pulling 2 nucleotides of DNA out of the RuvA tetramer per ATP hydrolyzed, thus driving DNA branch migration. The RuvB motors rotate together with the DNA substrate, which together with the progressing nucleotide cycle form the mechanistic basis for DNA recombination by continuous HJ branch migration. Branch migration allows RuvC to scan DNA until it finds its consensus sequence, where it cleaves and resolves cruciform DNA. The sequence is that of Holliday junction branch migration complex subunit RuvB from Legionella pneumophila (strain Lens).